Reading from the N-terminus, the 153-residue chain is Large ribosomal subunit protein uL15 (153 aa).

Positions 1–42 are disordered; it reads MKLNTIKPGIGSAKPKRRVGRGIGSGLGKTCGRGHKGQKSRA. The segment covering 21 to 31 has biased composition (gly residues); sequence RGIGSGLGKTC.

Belongs to the universal ribosomal protein uL15 family. Part of the 50S ribosomal subunit.

In terms of biological role, binds to the 23S rRNA. In Nitrosomonas europaea (strain ATCC 19718 / CIP 103999 / KCTC 2705 / NBRC 14298), this protein is Large ribosomal subunit protein uL15.